A 313-amino-acid chain; its full sequence is Methionyl-tRNA formyltransferase (313 aa).

Residue 109 to 112 (SLLP) participates in (6S)-5,6,7,8-tetrahydrofolate binding.

The protein belongs to the Fmt family.

It carries out the reaction L-methionyl-tRNA(fMet) + (6R)-10-formyltetrahydrofolate = N-formyl-L-methionyl-tRNA(fMet) + (6S)-5,6,7,8-tetrahydrofolate + H(+). In terms of biological role, attaches a formyl group to the free amino group of methionyl-tRNA(fMet). The formyl group appears to play a dual role in the initiator identity of N-formylmethionyl-tRNA by promoting its recognition by IF2 and preventing the misappropriation of this tRNA by the elongation apparatus. This Thermotoga neapolitana (strain ATCC 49049 / DSM 4359 / NBRC 107923 / NS-E) protein is Methionyl-tRNA formyltransferase.